The following is a 681-amino-acid chain: DNA ligase (681 aa).

NAD(+) is bound by residues 32 to 36 (DIEYD), 81 to 82 (SL), and Glu-113. The active-site N6-AMP-lysine intermediate is Lys-115. The NAD(+) site is built by Arg-136, Glu-173, Lys-290, and Lys-314. Zn(2+) contacts are provided by Cys-408, Cys-411, Cys-426, and Cys-432. One can recognise a BRCT domain in the interval 596-681 (EIDSPFAGKT…LNNHGDVSTL (86 aa)).

The protein belongs to the NAD-dependent DNA ligase family. LigA subfamily. The cofactor is Mg(2+). Mn(2+) serves as cofactor.

The enzyme catalyses NAD(+) + (deoxyribonucleotide)n-3'-hydroxyl + 5'-phospho-(deoxyribonucleotide)m = (deoxyribonucleotide)n+m + AMP + beta-nicotinamide D-nucleotide.. In terms of biological role, DNA ligase that catalyzes the formation of phosphodiester linkages between 5'-phosphoryl and 3'-hydroxyl groups in double-stranded DNA using NAD as a coenzyme and as the energy source for the reaction. It is essential for DNA replication and repair of damaged DNA. The protein is DNA ligase of Pectobacterium atrosepticum (strain SCRI 1043 / ATCC BAA-672) (Erwinia carotovora subsp. atroseptica).